Consider the following 120-residue polypeptide: Large ribosomal subunit protein uL18 (120 aa).

It belongs to the universal ribosomal protein uL18 family. Part of the 50S ribosomal subunit; part of the 5S rRNA/L5/L18/L25 subcomplex. Contacts the 5S and 23S rRNAs.

Functionally, this is one of the proteins that bind and probably mediate the attachment of the 5S RNA into the large ribosomal subunit, where it forms part of the central protuberance. This chain is Large ribosomal subunit protein uL18, found in Bacillus cereus (strain G9842).